Consider the following 964-residue polypeptide: Insulin receptor substrate 1 (964 aa).

One can recognise a PH domain in the interval 8–109 (GMALSGNLKK…WLDKLLVLQR (102 aa)). Residues 122–236 (YDQVWQVVIQ…SAMSAKTESN (115 aa)) form the IRS-type PTB domain. Residues 249–268 (LSHEPMRKRSSSANEASKPI) form a disordered region. Phosphoserine occurs at positions 286, 287, and 342. Tyrosine 410 bears the Phosphotyrosine; by INSR mark. Residues 410-413 (YIPM) carry the YXXM motif 1 motif. Positions 527 to 560 (ASNRSQSSIGKEGSSYGSSANRQKKSTSAPLLSL) are disordered. The span at 528–560 (SNRSQSSIGKEGSSYGSSANRQKKSTSAPLLSL) shows a compositional bias: polar residues. Phosphoserine is present on serine 554. Residues 640-643 (YLEM) carry the YXXM motif 2 motif. Basic and acidic residues predominate over residues 698–712 (EKWREQPSRSEEKKS). Positions 698 to 735 (EKWREQPSRSEEKKSNSPLNDNPFSLKPTNVESKSKSH) are disordered. Residues 713–729 (NSPLNDNPFSLKPTNVE) show a composition bias toward polar residues. Tyrosine 907 carries the post-translational modification Phosphotyrosine; by INSR. Residues 921-964 (AKYLKRGSRESPPVSACPEDGNTYARIDFDQSDSSSSSSNIFNT) form a disordered region. A phosphoserine mark is found at serine 928 and serine 931. Tyrosine 944 carries the post-translational modification Phosphotyrosine; by INSR. Residues 952–964 (SDSSSSSSNIFNT) are compositionally biased toward low complexity.

Bindings to phosphatidylinositol 3-kinase and SHP2.

Its function is as follows. Activates phosphatidylinositol 3-kinase when bound to the regulatory p85 subunit. May mediate the control of various cellular processes by insulin-like peptides. When phosphorylated by the insulin receptor binds specifically to various cellular proteins containing SH2 domains. Involved in control of cell proliferation, cell size, and body and organ growth throughout development. Also has a role in a signaling pathway controlling the physiological response required to endure periods of low nutrient conditions. Insulin/insulin-like growth factor (IGF) signaling pathway has a role in regulating aging and is necessary in the ovary for vitellogenic maturation. The polypeptide is Insulin receptor substrate 1 (Drosophila sechellia (Fruit fly)).